We begin with the raw amino-acid sequence, 706 residues long: Envelope glycoprotein H (706 aa).

The signal sequence occupies residues 1–18 (MQLLCVFCLVLLWEVGAA). Over 19–682 (SLSEVKLHLD…LYEERAHVVL (664 aa)) the chain is Virion surface. Asn60 carries N-linked (GlcNAc...) asparagine; by host glycosylation. The segment at 165–229 (DKFQYTGAMT…QSGDYSLVIV (65 aa)) is interaction with gL. A disulfide bond links Cys278 and Cys335. Asn435 is a glycosylation site (N-linked (GlcNAc...) asparagine; by host). 2 cysteine pairs are disulfide-bonded: Cys454–Cys478 and Cys534–Cys587. Residues Asn549 and Asn604 are each glycosylated (N-linked (GlcNAc...) asparagine; by host). Cysteines 612 and 615 form a disulfide. Asn664 carries an N-linked (GlcNAc...) asparagine; by host glycan. The chain crosses the membrane as a helical span at residues 683–703 (AIILYFIAFALGIFLVHKIVM). Topologically, residues 704–706 (FFL) are intravirion.

It belongs to the herpesviridae glycoprotein H family. Interacts with glycoprotein L (gL); this interaction is necessary for the correct processing and cell surface expression of gH. The heterodimer gH/gL seems to interact with gB trimers during fusion. The heterodimer gH/gL interacts with host EPHA2 to facilitate virus internalization and fusion. Interacts with glycoprotein 42/BZLF2. N-glycosylated, O-glycosylated, and sialylated.

The protein localises to the virion membrane. Its subcellular location is the host cell membrane. It is found in the host endosome membrane. In terms of biological role, the heterodimer glycoprotein H-glycoprotein L is required for the fusion of viral and plasma membranes leading to virus entry into the host cell. Following initial binding to host receptor, membrane fusion is mediated by the fusion machinery composed of gB and the heterodimer gH/gL. May also be involved in the fusion between the virion envelope and the outer nuclear membrane during virion morphogenesis. The heterodimer gH/gL targets also host EPHA2 to promote viral entry. In Homo sapiens (Human), this protein is Envelope glycoprotein H.